Here is a 145-residue protein sequence, read N- to C-terminus: uncharacterized protein (145 aa).

Positions 1-29 (MHLIRAAGAVCLAVVLIAGCRFNEDQHQA) are cleaved as a signal peptide. Residues 67–101 (KNGTQEKAEIQDKLSGVNQEGEEALDEMKMILSEL) are a coiled coil.

This is an uncharacterized protein from Bacillus subtilis (strain 168).